A 175-amino-acid chain; its full sequence is Shikimate kinase (175 aa).

An ATP-binding site is contributed by 12-19; that stretch reads GGRASGKS.

It belongs to the shikimate kinase family.

Its subcellular location is the cytoplasm. It catalyses the reaction shikimate + ATP = 3-phosphoshikimate + ADP + H(+). Its pathway is metabolic intermediate biosynthesis; chorismate biosynthesis; chorismate from D-erythrose 4-phosphate and phosphoenolpyruvate: step 5/7. The chain is Shikimate kinase from Nitratidesulfovibrio vulgaris (strain ATCC 29579 / DSM 644 / CCUG 34227 / NCIMB 8303 / VKM B-1760 / Hildenborough) (Desulfovibrio vulgaris).